Consider the following 123-residue polypeptide: Small ribosomal subunit protein uS12 (123 aa).

Asp-89 is modified (3-methylthioaspartic acid).

It belongs to the universal ribosomal protein uS12 family. In terms of assembly, part of the 30S ribosomal subunit. Contacts proteins S8 and S17. May interact with IF1 in the 30S initiation complex.

In terms of biological role, with S4 and S5 plays an important role in translational accuracy. Its function is as follows. Interacts with and stabilizes bases of the 16S rRNA that are involved in tRNA selection in the A site and with the mRNA backbone. Located at the interface of the 30S and 50S subunits, it traverses the body of the 30S subunit contacting proteins on the other side and probably holding the rRNA structure together. The combined cluster of proteins S8, S12 and S17 appears to hold together the shoulder and platform of the 30S subunit. This Methylobacterium sp. (strain 4-46) protein is Small ribosomal subunit protein uS12.